Reading from the N-terminus, the 460-residue chain is Bifunctional protein GlmU (460 aa).

The segment at M1–P233 is pyrophosphorylase. UDP-N-acetyl-alpha-D-glucosamine is bound by residues K21, Q76, and G81 to T82. D105 contacts Mg(2+). UDP-N-acetyl-alpha-D-glucosamine-binding residues include G140, E158, and N231. Position 231 (N231) interacts with Mg(2+). The interval L234–A254 is linker. Positions G255 to R460 are N-acetyltransferase. R337 and K355 together coordinate UDP-N-acetyl-alpha-D-glucosamine. H367 acts as the Proton acceptor in catalysis. Residues Y370 and N381 each coordinate UDP-N-acetyl-alpha-D-glucosamine. Acetyl-CoA contacts are provided by residues A384, N390–Y391, S409, G427, and R444.

In the N-terminal section; belongs to the N-acetylglucosamine-1-phosphate uridyltransferase family. The protein in the C-terminal section; belongs to the transferase hexapeptide repeat family. In terms of assembly, homotrimer. It depends on Mg(2+) as a cofactor.

It localises to the cytoplasm. It catalyses the reaction alpha-D-glucosamine 1-phosphate + acetyl-CoA = N-acetyl-alpha-D-glucosamine 1-phosphate + CoA + H(+). The enzyme catalyses N-acetyl-alpha-D-glucosamine 1-phosphate + UTP + H(+) = UDP-N-acetyl-alpha-D-glucosamine + diphosphate. It participates in nucleotide-sugar biosynthesis; UDP-N-acetyl-alpha-D-glucosamine biosynthesis; N-acetyl-alpha-D-glucosamine 1-phosphate from alpha-D-glucosamine 6-phosphate (route II): step 2/2. Its pathway is nucleotide-sugar biosynthesis; UDP-N-acetyl-alpha-D-glucosamine biosynthesis; UDP-N-acetyl-alpha-D-glucosamine from N-acetyl-alpha-D-glucosamine 1-phosphate: step 1/1. The protein operates within bacterial outer membrane biogenesis; LPS lipid A biosynthesis. Catalyzes the last two sequential reactions in the de novo biosynthetic pathway for UDP-N-acetylglucosamine (UDP-GlcNAc). The C-terminal domain catalyzes the transfer of acetyl group from acetyl coenzyme A to glucosamine-1-phosphate (GlcN-1-P) to produce N-acetylglucosamine-1-phosphate (GlcNAc-1-P), which is converted into UDP-GlcNAc by the transfer of uridine 5-monophosphate (from uridine 5-triphosphate), a reaction catalyzed by the N-terminal domain. The sequence is that of Bifunctional protein GlmU from Methylibium petroleiphilum (strain ATCC BAA-1232 / LMG 22953 / PM1).